The chain runs to 549 residues: Probable acyl-activating enzyme 10 (549 aa).

This sequence belongs to the ATP-dependent AMP-binding enzyme family. In terms of tissue distribution, expressed at low levels in roots.

In terms of biological role, may act as an acid--thiol ligase that activates carboxylic acids by forming acyl-CoAs. In Arabidopsis thaliana (Mouse-ear cress), this protein is Probable acyl-activating enzyme 10 (AEE10).